The sequence spans 250 residues: Kv channel-interacting protein 4 (250 aa).

The tract at residues 2 to 44 (NVRRVESISAQLEEASSTGGFLYTQNSTKRSIKERLMKLLPCS) is KIS. Phosphoserine occurs at positions 17 and 56. The region spanning 61-117 (LEMATVRHRPEALELLEAQSKFTKKELQILYRGFKNECPSGVVNEDTFKEIYSQFFP) is the EF-hand 1; degenerate domain. 3 consecutive EF-hand domains span residues 120-155 (DSTT…LLRG), 156-191 (TVQE…IYDM), and 204-239 (APRQ…DENI). Positions 133, 135, 137, 144, 169, 171, 173, 175, 180, 217, 219, 221, and 228 each coordinate Ca(2+). The tract at residues 237-250 (ENIMRSMQLFENVI) is interaction with KCND2.

It belongs to the recoverin family. Component of heteromultimeric potassium channels. Identified in potassium channel complexes containing KCND1, KCND2, KCND3, KCNIP1, KCNIP2, KCNIP3, KCNIP4, DPP6 and DPP10. Interacts with KCND2. Interacts with KCND3. Interacts with the C-terminus of PSEN2 and probably PSEN1.

Its subcellular location is the cell membrane. The protein resides in the cytoplasm. It is found in the peroxisome. Regulatory subunit of Kv4/D (Shal)-type voltage-gated rapidly inactivating A-type potassium channels. Modulates KCND2 channel density, inactivation kinetics and rate of recovery from inactivation in a calcium-dependent and isoform-specific manner. Modulates KCND3/Kv4.3 currents. Isoform 4 does not increase KCND2 expression at the cell membrane. Isoform 4 retains KCND3 in the endoplasmic reticulum and negatively regulates its expression at the cell membrane. In Bos taurus (Bovine), this protein is Kv channel-interacting protein 4 (KCNIP4).